Consider the following 2185-residue polypeptide: Genome polyprotein (2185 aa).

A lipid anchor (N-myristoyl glycine; by host) is attached at G2. Topologically, residues 2 to 1495 (GAQVSTQKTG…HVNRAFICLQ (1494 aa)) are cytoplasmic. An amphipathic alpha-helix region spans residues 566–582 (FFQGPPGEVMGRAIARV). Catalysis depends on for protease 2A activity residues H872 and D890. Positions 907 and 909 each coordinate Zn(2+). C961 acts as the For protease 2A activity in catalysis. Zn(2+) contacts are provided by C967 and H969. The membrane-binding stretch occupies residues 1101–1173 (NSGWLKKFTE…EQSAPSQSDQ (73 aa)). The tract at residues 1101 to 1239 (NSGWLKKFTE…SPGAGKSVAT (139 aa)) is oligomerization. Residues 1122-1126 (AIKIQ) are RNA-binding. Residues 1205 to 1361 (EKKMSNYIQF…SMYSQNGKIN (157 aa)) enclose the SF3 helicase domain. The Zn(2+) site is built by C1369, C1381, and C1386. A C4-type; degenerate zinc finger spans residues 1369-1386 (CDEECCPVNFKKCCPLVC). The RNA-binding stretch occupies residues 1413-1420 (EYNHRHSV). The interval 1424 to 1429 (LEALFQ) is oligomerization. Residues 1496-1511 (ALTTFVSVAGIIYIIY) lie within the membrane without spanning it. Residues 1512-2185 (KLFAGFQGAY…TLRRKWLDSF (674 aa)) are Cytoplasmic-facing. Residue Y1521 is modified to O-(5'-phospho-RNA)-tyrosine. Positions 1541-1719 (GPAFEFAVAM…FSAALLRHYF (179 aa)) constitute a Peptidase C3 domain. Catalysis depends on for protease 3C activity residues H1580, E1611, and C1687. One can recognise a RdRp catalytic domain in the interval 1950 to 2066 (GHLIAFDYSG…SYPWPIDASL (117 aa)). 2 residues coordinate Mg(2+): D1956 and D2052.

The protein belongs to the picornaviruses polyprotein family. Interacts with capsid protein VP1 and capsid protein VP3 to form heterotrimeric protomers. In terms of assembly, interacts with capsid protein VP0, and capsid protein VP3 to form heterotrimeric protomers. Five protomers subsequently associate to form pentamers which serve as building blocks for the capsid. Interacts with capsid protein VP2, capsid protein VP3 and capsid protein VP4 following cleavage of capsid protein VP0. Interacts with host CXADR. As to quaternary structure, interacts with capsid protein VP1 and capsid protein VP3 in the mature capsid. Interacts with capsid protein VP0 and capsid protein VP1 to form heterotrimeric protomers. Five protomers subsequently associate to form pentamers which serve as building blocks for the capsid. Interacts with capsid protein VP4 in the mature capsid. Interacts with protein 2C; this interaction may be important for virion morphogenesis. In terms of assembly, interacts with capsid protein VP1 and capsid protein VP3. As to quaternary structure, homodimer. Homohexamer; forms a hexameric ring structure with 6-fold symmetry characteristic of AAA+ ATPases. Interacts (via N-terminus) with host RTN3 (via reticulon domain); this interaction is important for viral replication. Interacts with capsid protein VP3; this interaction may be important for virion morphogenesis. In terms of assembly, interacts with protein 3CD. As to quaternary structure, homodimer. Interacts with host GBF1. Interacts (via GOLD domain) with host ACBD3 (via GOLD domain); this interaction allows the formation of a viral protein 3A/ACBD3 heterotetramer with a 2:2 stoichiometry, which will stimulate the recruitment of host PI4KB in order to synthesize PI4P at the viral RNA replication sites. Interacts with RNA-directed RNA polymerase. In terms of assembly, interacts with protein 3AB and with RNA-directed RNA polymerase. As to quaternary structure, interacts with Viral protein genome-linked and with protein 3CD. Mg(2+) serves as cofactor. In terms of processing, specific enzymatic cleavages in vivo by the viral proteases yield processing intermediates and the mature proteins. Myristoylation is required for the formation of pentamers during virus assembly. Further assembly of 12 pentamers and a molecule of genomic RNA generates the provirion. Post-translationally, during virion maturation, immature virions are rendered infectious following cleavage of VP0 into VP4 and VP2. This maturation seems to be an autocatalytic event triggered by the presence of RNA in the capsid and it is followed by a conformational change infectious virion. In terms of processing, myristoylation is required during RNA encapsidation and formation of the mature virus particle. VPg is uridylylated by the polymerase into VPg-pUpU. This acts as a nucleotide-peptide primer for the genomic RNA replication.

Its subcellular location is the virion. The protein localises to the host cytoplasm. It is found in the host cytoplasmic vesicle membrane. It localises to the host nucleus. It carries out the reaction a ribonucleoside 5'-triphosphate + H2O = a ribonucleoside 5'-diphosphate + phosphate + H(+). The catalysed reaction is Selective cleavage of Tyr-|-Gly bond in the picornavirus polyprotein.. The enzyme catalyses RNA(n) + a ribonucleoside 5'-triphosphate = RNA(n+1) + diphosphate. It catalyses the reaction Selective cleavage of Gln-|-Gly bond in the poliovirus polyprotein. In other picornavirus reactions Glu may be substituted for Gln, and Ser or Thr for Gly.. Replication or transcription is subject to high level of random mutations by the nucleotide analog ribavirin. In terms of biological role, forms an icosahedral capsid of pseudo T=3 symmetry with capsid proteins VP2 and VP3. The capsid is 300 Angstroms in diameter, composed of 60 copies of each capsid protein and enclosing the viral positive strand RNA genome. Capsid protein VP1 mainly forms the vertices of the capsid. Capsid protein VP1 interacts with host CXADR to provide virion attachment to target host cells. This attachment induces virion internalization. Tyrosine kinases are probably involved in the entry process. After binding to its receptor, the capsid undergoes conformational changes. Capsid protein VP1 N-terminus (that contains an amphipathic alpha-helix) and capsid protein VP4 are externalized. Together, they shape a pore in the host membrane through which viral genome is translocated to host cell cytoplasm. Forms an icosahedral capsid of pseudo T=3 symmetry with capsid proteins VP2 and VP3. The capsid is 300 Angstroms in diameter, composed of 60 copies of each capsid protein and enclosing the viral positive strand RNA genome. Functionally, lies on the inner surface of the capsid shell. After binding to the host receptor, the capsid undergoes conformational changes. Capsid protein VP4 is released, Capsid protein VP1 N-terminus is externalized, and together, they shape a pore in the host membrane through which the viral genome is translocated into the host cell cytoplasm. Its function is as follows. Component of immature procapsids, which is cleaved into capsid proteins VP4 and VP2 after maturation. Allows the capsid to remain inactive before the maturation step. In terms of biological role, cysteine protease that cleaves viral polyprotein and specific host proteins. It is responsible for the autocatalytic cleavage between the P1 and P2 regions, which is the first cleavage occurring in the polyprotein. Also cleaves the host translation initiation factor EIF4G1, in order to shut down the capped cellular mRNA translation. Inhibits the host nucleus-cytoplasm protein and RNA trafficking by cleaving host members of the nuclear pores. Counteracts stress granule formation probably by antagonizing its assembly or promoting its dissassembly. Plays an essential role in the virus replication cycle by acting as a viroporin. Creates a pore in the host endoplasmic reticulum and as a consequence releases Ca2+ in the cytoplasm of infected cell. In turn, high levels of cytoplasmic calcium may trigger membrane trafficking and transport of viral ER-associated proteins to viroplasms, sites of viral genome replication. Functionally, induces and associates with structural rearrangements of intracellular membranes. Displays RNA-binding, nucleotide binding and NTPase activities. May play a role in virion morphogenesis and viral RNA encapsidation by interacting with the capsid protein VP3. Its function is as follows. Localizes the viral replication complex to the surface of membranous vesicles. Together with protein 3CD binds the Cis-Active RNA Element (CRE) which is involved in RNA synthesis initiation. Acts as a cofactor to stimulate the activity of 3D polymerase, maybe through a nucleid acid chaperone activity. In terms of biological role, localizes the viral replication complex to the surface of membranous vesicles. It inhibits host cell endoplasmic reticulum-to-Golgi apparatus transport and causes the disassembly of the Golgi complex, possibly through GBF1 interaction. This would result in depletion of MHC, trail receptors and IFN receptors at the host cell surface. Plays an essential role in viral RNA replication by recruiting ACBD3 and PI4KB at the viral replication sites, thereby allowing the formation of the rearranged membranous structures where viral replication takes place. Acts as a primer for viral RNA replication and remains covalently bound to viral genomic RNA. VPg is uridylylated prior to priming replication into VPg-pUpU. The oriI viral genomic sequence may act as a template for this. The VPg-pUpU is then used as primer on the genomic RNA poly(A) by the RNA-dependent RNA polymerase to replicate the viral genome. During genome replication, the VPg-RNA linkage is removed by the host TDP2, thereby accelerating replication. During the late stage of the replication cycle, host TDP2 is excluded from sites of viral RNA synthesis and encapsidation, allowing for the generation of progeny virions. Functionally, involved in the viral replication complex and viral polypeptide maturation. It exhibits protease activity with a specificity and catalytic efficiency that is different from protease 3C. Protein 3CD lacks polymerase activity. Protein 3CD binds to the 5'UTR of the viral genome. Its function is as follows. Replicates the viral genomic RNA on the surface of intracellular membranes. May form linear arrays of subunits that propagate along a strong head-to-tail interaction called interface-I. Covalently attaches UMP to a tyrosine of VPg, which is used to prime RNA synthesis. The positive stranded RNA genome is first replicated at virus induced membranous vesicles, creating a dsRNA genomic replication form. This dsRNA is then used as template to synthesize positive stranded RNA genomes. ss(+)RNA genomes are either translated, replicated or encapsidated. In terms of biological role, major viral protease that mediates proteolytic processing of the polyprotein. Cleaves host EIF5B, contributing to host translation shutoff. Also cleaves host PABPC1, contributing to host translation shutoff. Cleaves host NLRP1, triggers host N-glycine-mediated degradation of the autoinhibitory NLRP1 N-terminal fragment. This is Genome polyprotein from Sus scrofa (Pig).